The sequence spans 509 residues: Cytochrome P450 monooxygenase CYP512U6 (509 aa).

A helical transmembrane segment spans residues Val-12–Thr-29. Cys-446 lines the heme pocket.

Belongs to the cytochrome P450 family. It depends on heme as a cofactor.

It is found in the membrane. The enzyme catalyses ganoderate DM + reduced [NADPH--hemoprotein reductase] + O2 = hainanate A + oxidized [NADPH--hemoprotein reductase] + H2O + H(+). It carries out the reaction ganoderate TR + reduced [NADPH--hemoprotein reductase] + O2 = ganoderate Jc + oxidized [NADPH--hemoprotein reductase] + H2O + H(+). It participates in secondary metabolite biosynthesis; terpenoid biosynthesis. Its function is as follows. Cytochrome P450 monooxygenase that hydroxylates the ganoderic acids DM and TR at the C-23 position to produce hainanic acid A and ganoderic acid Jc, respectively. The sequence is that of Cytochrome P450 monooxygenase CYP512U6 from Ganoderma lucidum (Ling zhi medicinal fungus).